Consider the following 295-residue polypeptide: ER-localized J domain-containing protein 5 (295 aa).

The first 20 residues, 1–20 (MNGYWKPALVVLGLVSLSYA), serve as a signal peptide directing secretion. At 21-130 (FTTIETEIFQ…GFYFSRMKPK (110 aa)) the chain is on the lumenal side. In terms of domain architecture, J spans 42–110 (DMNFYKFLKL…RKIYDYYLQN (69 aa)). Residues 131-151 (TWFLLAFIWIVVNIGQYIISI) form a helical membrane-spanning segment. At 152-295 (IQYRSQRSRI…PNGKVIYSRK (144 aa)) the chain is on the cytoplasmic side. A disordered region spans residues 259–287 (KYDGNQTKKGNKVKKGSAKKGQKKMELPN). Basic residues predominate over residues 267–280 (KGNKVKKGSAKKGQ).

It belongs to the DnaJ family.

The protein localises to the endoplasmic reticulum membrane. Functionally, dnaJ-like chaperone required for the folding capacity of the endoplasmic reticulum. This chain is ER-localized J domain-containing protein 5 (ERJ5), found in Saccharomyces cerevisiae (strain ATCC 204508 / S288c) (Baker's yeast).